Here is a 90-residue protein sequence, read N- to C-terminus: Co-chaperonin GroES (90 aa).

Belongs to the GroES chaperonin family. As to quaternary structure, heptamer of 7 subunits arranged in a ring. Interacts with the chaperonin GroEL.

It localises to the cytoplasm. In terms of biological role, together with the chaperonin GroEL, plays an essential role in assisting protein folding. The GroEL-GroES system forms a nano-cage that allows encapsulation of the non-native substrate proteins and provides a physical environment optimized to promote and accelerate protein folding. GroES binds to the apical surface of the GroEL ring, thereby capping the opening of the GroEL channel. This Bacteroides thetaiotaomicron (strain ATCC 29148 / DSM 2079 / JCM 5827 / CCUG 10774 / NCTC 10582 / VPI-5482 / E50) protein is Co-chaperonin GroES.